Reading from the N-terminus, the 813-residue chain is Protein PPP4R3C1 (813 aa).

Residues Asn-730–Thr-813 form a disordered region. A compositionally biased stretch (acidic residues) spans Tyr-777–Tyr-788.

The protein belongs to the SMEK family.

The polypeptide is Protein PPP4R3C1 (Mus musculus (Mouse)).